The following is a 76-amino-acid chain: Small ribosomal subunit protein uS17 (76 aa).

It belongs to the universal ribosomal protein uS17 family. In terms of assembly, part of the 30S ribosomal subunit.

Functionally, one of the primary rRNA binding proteins, it binds specifically to the 5'-end of 16S ribosomal RNA. This chain is Small ribosomal subunit protein uS17, found in Ruegeria pomeroyi (strain ATCC 700808 / DSM 15171 / DSS-3) (Silicibacter pomeroyi).